The following is a 286-amino-acid chain: Bifunctional protein FolD (286 aa).

Residues 166-168 (GAS) and Ile232 each bind NADP(+).

The protein belongs to the tetrahydrofolate dehydrogenase/cyclohydrolase family. In terms of assembly, homodimer.

The enzyme catalyses (6R)-5,10-methylene-5,6,7,8-tetrahydrofolate + NADP(+) = (6R)-5,10-methenyltetrahydrofolate + NADPH. It catalyses the reaction (6R)-5,10-methenyltetrahydrofolate + H2O = (6R)-10-formyltetrahydrofolate + H(+). The protein operates within one-carbon metabolism; tetrahydrofolate interconversion. In terms of biological role, catalyzes the oxidation of 5,10-methylenetetrahydrofolate to 5,10-methenyltetrahydrofolate and then the hydrolysis of 5,10-methenyltetrahydrofolate to 10-formyltetrahydrofolate. The sequence is that of Bifunctional protein FolD from Blochmanniella pennsylvanica (strain BPEN).